A 657-amino-acid polypeptide reads, in one-letter code: Glycogen debranching enzyme (657 aa).

D336 (nucleophile) is an active-site residue. E371 functions as the Proton donor in the catalytic mechanism. Residues A460 to G481 form a disordered region.

It belongs to the glycosyl hydrolase 13 family.

It carries out the reaction Hydrolysis of (1-&gt;6)-alpha-D-glucosidic linkages to branches with degrees of polymerization of three or four glucose residues in limit dextrin.. It functions in the pathway glycan degradation; glycogen degradation. Functionally, removes maltotriose and maltotetraose chains that are attached by 1,6-alpha-linkage to the limit dextrin main chain, generating a debranched limit dextrin. This Escherichia coli O157:H7 protein is Glycogen debranching enzyme.